We begin with the raw amino-acid sequence, 229 residues long: Aspartate-rich protein 1 (229 aa).

The disordered stretch occupies residues 84-106 (SEEDNDDAKILPSPVQGSSEDNL).

The chain is Aspartate-rich protein 1 (DRICH1) from Homo sapiens (Human).